Here is a 340-residue protein sequence, read N- to C-terminus: S-adenosylmethionine:tRNA ribosyltransferase-isomerase (340 aa).

This sequence belongs to the QueA family. As to quaternary structure, monomer.

It localises to the cytoplasm. It catalyses the reaction 7-aminomethyl-7-carbaguanosine(34) in tRNA + S-adenosyl-L-methionine = epoxyqueuosine(34) in tRNA + adenine + L-methionine + 2 H(+). It participates in tRNA modification; tRNA-queuosine biosynthesis. Transfers and isomerizes the ribose moiety from AdoMet to the 7-aminomethyl group of 7-deazaguanine (preQ1-tRNA) to give epoxyqueuosine (oQ-tRNA). The polypeptide is S-adenosylmethionine:tRNA ribosyltransferase-isomerase (Francisella tularensis subsp. tularensis (strain FSC 198)).